We begin with the raw amino-acid sequence, 254 residues long: SLA class II histocompatibility antigen, DQ haplotype C alpha chain (254 aa).

Positions 1–23 are cleaved as a signal peptide; sequence MVPGRVLMWGALALTTVMSACGG. An alpha-1 region spans residues 24–120; the sequence is EDIAADHVAS…KVPEVTVFSK (97 aa). At 24-216 the chain is on the extracellular side; sequence EDIAADHVAS…IPAPMSELTE (193 aa). N104 and N144 each carry an N-linked (GlcNAc...) asparagine glycan. Residues 113 to 204 form the Ig-like C1-type domain; the sequence is PEVTVFSKSP…LDKPLLKHWE (92 aa). Positions 121-203 are alpha-2; the sequence is SPVILGQPNT…GLDKPLLKHW (83 aa). Cysteines 133 and 188 form a disulfide. Residues 204–216 are connecting peptide; the sequence is EPEIPAPMSELTE. A helical transmembrane segment spans residues 217–239; sequence TVVCALGLIVGLVGIVVGTVFII. Residues 240 to 254 are Cytoplasmic-facing; sequence QGLRSGGPSRHQGSL.

Belongs to the MHC class II family.

Its subcellular location is the membrane. The chain is SLA class II histocompatibility antigen, DQ haplotype C alpha chain from Sus scrofa (Pig).